The sequence spans 400 residues: Cytoplasmic polyadenylated homeobox-like protein 2 (400 aa).

The disordered stretch occupies residues 1–29 (MSSQAFPAEEDHHNEERQTKKKRKTKHRH). Residues 9-18 (EEDHHNEERQ) show a composition bias toward basic and acidic residues. Basic residues predominate over residues 19 to 29 (TKKKRKTKHRH). Residues 24 to 83 (KTKHRHKFSEELLQELKEIFGENGYPDFTTRKTLANKFDCPVNVINNWFQNNRARLPPEE) constitute a DNA-binding region (homeobox).

It is found in the nucleus. The protein is Cytoplasmic polyadenylated homeobox-like protein 2 of Homo sapiens (Human).